A 288-amino-acid chain; its full sequence is MDVTAKYELIGLMAYPIRHSLSPEMQNKALEKAGLPFTYMAFEVDNDSFPAAIEGLKALKMRGTGVSMPNKQLACEYVDELTPAAKLVGAINTIVNDDGYLRGYNTDGTGHIRAIKESGFDIKGKTMVLLGAGGASTAIGAQGAIEGLKEIKLFNRRDEFFDKALAFAQRVNENTDCVVTVTDLADQQAFAEALASADILTNGTKVGMKPLENESLVNDISLLHPGLLVTECVYNPHMTKLLQQAQQAGCKTIDGYGMLLWQGAEQFTLWTGKDFPLEYVKQVMGFGA.

Residues Lys71 and Asp107 each contribute to the substrate site. NAD(+) contacts are provided by residues 132–135 (AGGA), 155–158 (NRRD), Lys205, 232–235 (CVYN), and Gly255.

The protein belongs to the shikimate dehydrogenase family. Homodimer.

The catalysed reaction is L-quinate + NAD(+) = 3-dehydroquinate + NADH + H(+). It carries out the reaction L-quinate + NADP(+) = 3-dehydroquinate + NADPH + H(+). The enzyme catalyses shikimate + NADP(+) = 3-dehydroshikimate + NADPH + H(+). It catalyses the reaction shikimate + NAD(+) = 3-dehydroshikimate + NADH + H(+). It participates in metabolic intermediate biosynthesis; chorismate biosynthesis; chorismate from D-erythrose 4-phosphate and phosphoenolpyruvate: step 4/7. The actual biological function of YdiB remains unclear, nor is it known whether 3-dehydroshikimate or quinate represents the natural substrate. Catalyzes the reversible NAD-dependent reduction of both 3-dehydroshikimate (DHSA) and 3-dehydroquinate to yield shikimate (SA) and quinate, respectively. It can use both NAD or NADP for catalysis, however it has higher catalytic efficiency with NAD. The polypeptide is Quinate/shikimate dehydrogenase (Escherichia coli O1:K1 / APEC).